Here is a 749-residue protein sequence, read N- to C-terminus: Catalase-peroxidase (749 aa).

The segment covering 1 to 12 (MSSDTSDTRPPH) has biased composition (basic and acidic residues). A disordered region spans residues 1 to 40 (MSSDTSDTRPPHSDSGTQSNSESENPIIDSPEPKAHAPLT). A compositionally biased stretch (polar residues) spans 14–24 (DSGTQSNSESE). The segment at residues 113–240 (WHAAGTYRIF…FGATTMGLIY (128 aa)) is a cross-link (tryptophyl-tyrosyl-methioninium (Trp-Tyr) (with M-266)). The Proton acceptor role is filled by His114. A cross-link (tryptophyl-tyrosyl-methioninium (Tyr-Met) (with W-113)) is located at residues 240 to 266 (YVNPEGPEGKPDPLAAAHDIRETFGRM). Residue His281 coordinates heme b.

The protein belongs to the peroxidase family. Peroxidase/catalase subfamily. Homodimer or homotetramer. Heme b is required as a cofactor. Formation of the three residue Trp-Tyr-Met cross-link is important for the catalase, but not the peroxidase activity of the enzyme.

The enzyme catalyses H2O2 + AH2 = A + 2 H2O. The catalysed reaction is 2 H2O2 = O2 + 2 H2O. Bifunctional enzyme with both catalase and broad-spectrum peroxidase activity. This Mycobacterium sp. (strain JLS) protein is Catalase-peroxidase.